Here is a 256-residue protein sequence, read N- to C-terminus: Tryptophan synthase alpha chain (256 aa).

Residues glutamate 44 and aspartate 55 each act as proton acceptor in the active site.

The protein belongs to the TrpA family. As to quaternary structure, tetramer of two alpha and two beta chains.

It carries out the reaction (1S,2R)-1-C-(indol-3-yl)glycerol 3-phosphate + L-serine = D-glyceraldehyde 3-phosphate + L-tryptophan + H2O. The protein operates within amino-acid biosynthesis; L-tryptophan biosynthesis; L-tryptophan from chorismate: step 5/5. The alpha subunit is responsible for the aldol cleavage of indoleglycerol phosphate to indole and glyceraldehyde 3-phosphate. The sequence is that of Tryptophan synthase alpha chain from Coxiella burnetii (strain CbuK_Q154) (Coxiella burnetii (strain Q154)).